The sequence spans 85 residues: N.vectensis toxin 6 (85 aa).

Residues 1 to 20 form the signal peptide; sequence MISFKTVIVCLFLWVVIIGA. Disulfide bonds link Cys46–Cys82, Cys48–Cys71, and Cys64–Cys83.

Its function is as follows. Probable toxin. This is N.vectensis toxin 6 from Nematostella vectensis (Starlet sea anemone).